The primary structure comprises 239 residues: MRPSGREADQLRPLKITRNFTKHAEGSVLIECGDTKVICTATVVSGVPRFLKGKGQGWITAEYGMLPRSTHSRMDREAARGKQGGRTVEIQRLIGRSLRAAVDLKKLGENTITIDCDVIQADGGTRTASITGGFVALADAMRVLVENKKVKENPIVSQIAAISVGVYKGVPVLDLDYPEDSNAETDMNVIMNDKGGFIEIQGTAEGEAFSDEHMMGMLAVARKGIAEIMEAQRAALFDK.

Phosphate contacts are provided by residues R86 and 124–126 (GTR).

It belongs to the RNase PH family. Homohexameric ring arranged as a trimer of dimers.

The catalysed reaction is tRNA(n+1) + phosphate = tRNA(n) + a ribonucleoside 5'-diphosphate. Its function is as follows. Phosphorolytic 3'-5' exoribonuclease that plays an important role in tRNA 3'-end maturation. Removes nucleotide residues following the 3'-CCA terminus of tRNAs; can also add nucleotides to the ends of RNA molecules by using nucleoside diphosphates as substrates, but this may not be physiologically important. Probably plays a role in initiation of 16S rRNA degradation (leading to ribosome degradation) during starvation. The polypeptide is Ribonuclease PH (Marinomonas sp. (strain MWYL1)).